We begin with the raw amino-acid sequence, 347 residues long: Dihydroorotase (347 aa).

Zn(2+) contacts are provided by His17 and His19. Substrate contacts are provided by residues 19–21 (HLR) and Asn45. Residues Lys103, His140, and His178 each contribute to the Zn(2+) site. Residue Lys103 is modified to N6-carboxylysine. His140 lines the substrate pocket. Leu223 provides a ligand contact to substrate. Asp251 provides a ligand contact to Zn(2+). Residue Asp251 is part of the active site. Positions 255 and 267 each coordinate substrate.

It belongs to the metallo-dependent hydrolases superfamily. DHOase family. Class II DHOase subfamily. Homodimer. The cofactor is Zn(2+).

It carries out the reaction (S)-dihydroorotate + H2O = N-carbamoyl-L-aspartate + H(+). It functions in the pathway pyrimidine metabolism; UMP biosynthesis via de novo pathway; (S)-dihydroorotate from bicarbonate: step 3/3. Its function is as follows. Catalyzes the reversible cyclization of carbamoyl aspartate to dihydroorotate. The chain is Dihydroorotase from Pectobacterium carotovorum subsp. carotovorum (strain PC1).